Consider the following 1793-residue polypeptide: Protein TIC 214 (1793 aa).

6 helical membrane passes run 11–31, 64–84, 90–112, 129–149, 172–192, and 222–242; these read LVSL…YYGF, FITG…HIAL, ITVI…NFLN, IFFQ…SSIL, VGWL…LVWI, and IFLI…PPIY. The disordered stretch occupies residues 1504-1524; the sequence is DIEEDYGESDSKKGGKDKNKK.

This sequence belongs to the TIC214 family. In terms of assembly, part of the Tic complex.

The protein resides in the plastid. The protein localises to the chloroplast inner membrane. Involved in protein precursor import into chloroplasts. May be part of an intermediate translocation complex acting as a protein-conducting channel at the inner envelope. The chain is Protein TIC 214 from Lotus japonicus (Lotus corniculatus var. japonicus).